The following is an 89-amino-acid chain: Small ribosomal subunit protein uS15 (89 aa).

The protein belongs to the universal ribosomal protein uS15 family. Part of the 30S ribosomal subunit. Forms a bridge to the 50S subunit in the 70S ribosome, contacting the 23S rRNA.

Functionally, one of the primary rRNA binding proteins, it binds directly to 16S rRNA where it helps nucleate assembly of the platform of the 30S subunit by binding and bridging several RNA helices of the 16S rRNA. Its function is as follows. Forms an intersubunit bridge (bridge B4) with the 23S rRNA of the 50S subunit in the ribosome. The chain is Small ribosomal subunit protein uS15 from Azoarcus sp. (strain BH72).